We begin with the raw amino-acid sequence, 200 residues long: TATA-box-binding protein 1 (200 aa).

Position 2 is an N-acetylthreonine (T2). 2 repeat units span residues 25-101 and 115-192.

Belongs to the TBP family. As to quaternary structure, belongs to the TFIID complex together with the TBP-associated factors (TAFs). Binds DNA as monomer. Interacts with TAF1 (via N-terminus). Interacts with MEE12/CCG1. Associates with PWP2 in the nucleus. Component of a nuclear protein complex containing at least TATA binding proteins (TBPs, e.g. TBP1 and TBP2) and ATX1.

Its subcellular location is the nucleus. In terms of biological role, general transcription factor that functions at the core of the DNA-binding multiprotein factor TFIID. Binding of TFIID to the TATA box is the initial transcriptional step of the pre-initiation complex (PIC), playing a role in the activation of eukaryotic genes transcribed by RNA polymerase II. In Arabidopsis thaliana (Mouse-ear cress), this protein is TATA-box-binding protein 1.